The primary structure comprises 389 residues: Shewanella-like protein phosphatase 1 (389 aa).

A chloroplast-targeting transit peptide spans 1-53; the sequence is MASLYLNSLLPLPPSHPQKLLEPSSSSLLSTSNGNELALKPIVINGDPPTFVS. Mn(2+)-binding residues include Asp64, His66, Asp102, and Asn137. His138 serves as the catalytic Proton donor. His242 and His314 together coordinate Mn(2+).

The protein belongs to the metallophosphoesterase superfamily. SLP family. Requires Mn(2+) as cofactor. As to expression, expressed in rosettes leaves, shoots and flowers (at protein level).

It localises to the plastid. It is found in the chloroplast. Its function is as follows. Shows phosphatase activity, hydrolyzing the artificial substrate para-nitrophenylphosphate (pNPP) in vitro. The sequence is that of Shewanella-like protein phosphatase 1 from Arabidopsis thaliana (Mouse-ear cress).